The primary structure comprises 97 residues: UPF0213 protein YE0453 (97 aa).

Positions 4 to 79 (SLWHLYLLRT…KQLSKQQKEK (76 aa)) constitute a GIY-YIG domain.

This sequence belongs to the UPF0213 family.

The protein is UPF0213 protein YE0453 of Yersinia enterocolitica serotype O:8 / biotype 1B (strain NCTC 13174 / 8081).